A 189-amino-acid polypeptide reads, in one-letter code: Small heat shock protein 21 (189 aa).

The segment at 26-53 is disordered; that stretch reads PPNFNPRKIAQGDNGKGQQVSRYGAGAG. The region spanning 77–183 is the sHSP domain; that stretch reads KYFVGFDDNV…HEKIVNIPIS (107 aa).

It belongs to the small heat shock protein (HSP20) family.

In terms of biological role, heat shock protein required for pathogenicity. Mediates thermotolerance and adaptation to oxidative stress and ethanol-induced stress. Required for invasive growth and filament formation under various filament inducing conditions. Plays a role in the capacity of damaging human-derived endothelial and oral epithelial cells during infection. Potentiates resistance to antifungal drugs, as well as resistance to killing by human neutrophils. Plays a major role in trehalose homeostasis in response to elevated temperatures. Regulates CEK1 activation by phosphorylation in response to elevated temperatures. The protein is Small heat shock protein 21 (HSP21) of Candida albicans (strain SC5314 / ATCC MYA-2876) (Yeast).